Reading from the N-terminus, the 596-residue chain is MAKGRKLPSVMKNRFSEVPTATIRRSSFDRSHGYKTTFDMDYLVPFFVDEVLPGDTFSLSETHLCRLTTLVQPIMDNIQLTTQFFFVPNRLLWDNWESFITGGDEPVAWTSTNPANEYFVPQVTSPDGGYAENSIYDYFGLPTKVANYRHQVLPLRAYNLIFNEYYRDENLQESLPVWTGDADPKVDPTTGEESQEDDAVPYVYKLMRRNKRYDYFTSALPGLQKGPSVGIGITGGDSGRLPVHGLAIRSYLDDSSDDQFSFGVSYVNASQKWFTADGRLTSGMGSVPVGTTGNFPIDNVVYPSYFGTTVAQTGSPSSSSTPPFVKGDFPVYVDLAASSSVTINSLRNAITLQQWFEKSARYGSRYVESVQGHFGVHLGDYRAQRPIYLGGSKSYVSVNPVVQNSSTDSVSPQGNLSAYALSTDTKHLFTKSFVEHGFVIGLLSATADLTYQQGLERQWSRFSRYDYYWPTFAHLGEQPVYNKEIYCQSDTVMDPSGSAVNDVPFGYQERYAEYRYKPSKVTGLFRSNATGTLDSWHLSQNFANLPTLNETFIQSNTPIDRALAVPDQPDFICDFYFNYRCIRPMPVYSVPGLRRI.

This sequence belongs to the microviridae F protein family.

Its subcellular location is the virion. The protein localises to the host cytoplasm. Its function is as follows. Assembles to form an icosahedral capsid with a T=1 symmetry. The chain is Capsid protein VP1 from Chlamydia phage 1 (Bacteriophage Chp1).